A 299-amino-acid chain; its full sequence is Ribosomal RNA small subunit methyltransferase H (299 aa).

S-adenosyl-L-methionine is bound by residues 36 to 38, Asp-55, Asp-103, and Gln-110; that span reads GGH. 2 stretches are compositionally biased toward basic and acidic residues: residues 268 to 282 and 289 to 299; these read KPVRPSEEEIRENPR and RAAERIEKGGD. The segment at 268–299 is disordered; that stretch reads KPVRPSEEEIRENPRARSGRLRAAERIEKGGD.

It belongs to the methyltransferase superfamily. RsmH family.

It localises to the cytoplasm. It carries out the reaction cytidine(1402) in 16S rRNA + S-adenosyl-L-methionine = N(4)-methylcytidine(1402) in 16S rRNA + S-adenosyl-L-homocysteine + H(+). Functionally, specifically methylates the N4 position of cytidine in position 1402 (C1402) of 16S rRNA. The protein is Ribosomal RNA small subunit methyltransferase H of Thermotoga sp. (strain RQ2).